The following is a 102-amino-acid chain: Small ribosomal subunit protein uS10 (102 aa).

The protein belongs to the universal ribosomal protein uS10 family. In terms of assembly, part of the 30S ribosomal subunit.

Functionally, involved in the binding of tRNA to the ribosomes. The polypeptide is Small ribosomal subunit protein uS10 (Ligilactobacillus salivarius (strain UCC118) (Lactobacillus salivarius)).